The primary structure comprises 181 residues: Transcription termination/antitermination protein NusG (181 aa).

The 29-residue stretch at proline 130–leucine 158 folds into the KOW domain.

This sequence belongs to the NusG family. Monomer. Interacts with the transcription termination factor Rho and with RNA polymerase.

Functionally, participates in transcription elongation, termination and antitermination. In the absence of Rho, increases the rate of transcription elongation by the RNA polymerase (RNAP), probably by partially suppressing pausing. In the presence of Rho, modulates most Rho-dependent termination events by interacting with the RNAP to render the complex more susceptible to the termination activity of Rho. May be required to overcome a kinetic limitation of Rho to function at certain terminators. Also involved in ribosomal RNA transcriptional antitermination. This chain is Transcription termination/antitermination protein NusG, found in Buchnera aphidicola subsp. Baizongia pistaciae (strain Bp).